A 294-amino-acid chain; its full sequence is Probable endonuclease 4 (294 aa).

Residues H78, H118, E155, D189, H192, H226, D239, H241, and E271 each contribute to the Zn(2+) site.

The protein belongs to the AP endonuclease 2 family. Zn(2+) is required as a cofactor.

It carries out the reaction Endonucleolytic cleavage to 5'-phosphooligonucleotide end-products.. Endonuclease IV plays a role in DNA repair. It cleaves phosphodiester bonds at apurinic or apyrimidinic (AP) sites, generating a 3'-hydroxyl group and a 5'-terminal sugar phosphate. In Oleidesulfovibrio alaskensis (strain ATCC BAA-1058 / DSM 17464 / G20) (Desulfovibrio alaskensis), this protein is Probable endonuclease 4.